A 112-amino-acid chain; its full sequence is Putative pterin-4-alpha-carbinolamine dehydratase (112 aa).

This sequence belongs to the pterin-4-alpha-carbinolamine dehydratase family.

The catalysed reaction is (4aS,6R)-4a-hydroxy-L-erythro-5,6,7,8-tetrahydrobiopterin = (6R)-L-erythro-6,7-dihydrobiopterin + H2O. This is Putative pterin-4-alpha-carbinolamine dehydratase from Shewanella sp. (strain MR-7).